Here is a 72-residue protein sequence, read N- to C-terminus: uncharacterized protein (72 aa).

This is an uncharacterized protein from Vaccinia virus (strain Western Reserve) (VACV).